The chain runs to 197 residues: NADH-quinone oxidoreductase subunit C (197 aa).

It belongs to the complex I 30 kDa subunit family. In terms of assembly, NDH-1 is composed of 14 different subunits. Subunits NuoB, C, D, E, F, and G constitute the peripheral sector of the complex.

Its subcellular location is the cell inner membrane. The enzyme catalyses a quinone + NADH + 5 H(+)(in) = a quinol + NAD(+) + 4 H(+)(out). In terms of biological role, NDH-1 shuttles electrons from NADH, via FMN and iron-sulfur (Fe-S) centers, to quinones in the respiratory chain. The immediate electron acceptor for the enzyme in this species is believed to be ubiquinone. Couples the redox reaction to proton translocation (for every two electrons transferred, four hydrogen ions are translocated across the cytoplasmic membrane), and thus conserves the redox energy in a proton gradient. In Neisseria meningitidis serogroup A / serotype 4A (strain DSM 15465 / Z2491), this protein is NADH-quinone oxidoreductase subunit C.